We begin with the raw amino-acid sequence, 388 residues long: MNLHEYQGKQLFAEYGLPVSKGFAVDTPEEAAEACEKIGGSEWVVKAQVHAGGRGKAGGVKLVKSKEDAKAFAANWLGKRLVTYQTDANGQPVSKILVESCTDIAKELYLGAVVDRSSRRIVFMASTEGGVDIEKVAHETPEKILKATIDPLVGAQPYQGRELAFQLGLEGDQVKQFTHIFVGLAKLFQDYDLALLEVNPLVIKADGNLHCLDAKINIDSNAMYRQPKLRAMHDPSQDDPREAHAQKWELNYVALEGNIGCMVNGAGLAMGTMDIVNLHGGQPANFLDVGGGATKERVTEAFKIILSDDNVKAVLVNIFGGIVRCDMIAEGIIGAVKEVGVKIPVVVRLEGNNAELGAKVLADSGLNIIAATSLTDAAQQVVKAAEGK.

An ATP-grasp domain is found at lysine 9 to histidine 244. ATP contacts are provided by residues lysine 46, glycine 53–glycine 55, glutamate 99, threonine 102, and glutamate 107. Residues asparagine 199 and aspartate 213 each contribute to the Mg(2+) site. Substrate-binding positions include asparagine 264 and glycine 321 to valine 323.

Belongs to the succinate/malate CoA ligase beta subunit family. As to quaternary structure, heterotetramer of two alpha and two beta subunits. Requires Mg(2+) as cofactor.

The catalysed reaction is succinate + ATP + CoA = succinyl-CoA + ADP + phosphate. It carries out the reaction GTP + succinate + CoA = succinyl-CoA + GDP + phosphate. It participates in carbohydrate metabolism; tricarboxylic acid cycle; succinate from succinyl-CoA (ligase route): step 1/1. Functionally, succinyl-CoA synthetase functions in the citric acid cycle (TCA), coupling the hydrolysis of succinyl-CoA to the synthesis of either ATP or GTP and thus represents the only step of substrate-level phosphorylation in the TCA. The beta subunit provides nucleotide specificity of the enzyme and binds the substrate succinate, while the binding sites for coenzyme A and phosphate are found in the alpha subunit. The chain is Succinate--CoA ligase [ADP-forming] subunit beta from Ectopseudomonas mendocina (strain ymp) (Pseudomonas mendocina).